Reading from the N-terminus, the 363-residue chain is Peptide chain release factor 1 (363 aa).

At glutamine 237 the chain carries N5-methylglutamine.

Belongs to the prokaryotic/mitochondrial release factor family. In terms of processing, methylated by PrmC. Methylation increases the termination efficiency of RF1.

It is found in the cytoplasm. Peptide chain release factor 1 directs the termination of translation in response to the peptide chain termination codons UAG and UAA. This chain is Peptide chain release factor 1, found in Marinobacter nauticus (strain ATCC 700491 / DSM 11845 / VT8) (Marinobacter aquaeolei).